The following is a 257-amino-acid chain: Imidazole glycerol phosphate synthase subunit HisF (257 aa).

Residues Asp11 and Asp130 contribute to the active site.

It belongs to the HisA/HisF family. Heterodimer of HisH and HisF.

Its subcellular location is the cytoplasm. The catalysed reaction is 5-[(5-phospho-1-deoxy-D-ribulos-1-ylimino)methylamino]-1-(5-phospho-beta-D-ribosyl)imidazole-4-carboxamide + L-glutamine = D-erythro-1-(imidazol-4-yl)glycerol 3-phosphate + 5-amino-1-(5-phospho-beta-D-ribosyl)imidazole-4-carboxamide + L-glutamate + H(+). It functions in the pathway amino-acid biosynthesis; L-histidine biosynthesis; L-histidine from 5-phospho-alpha-D-ribose 1-diphosphate: step 5/9. Its function is as follows. IGPS catalyzes the conversion of PRFAR and glutamine to IGP, AICAR and glutamate. The HisF subunit catalyzes the cyclization activity that produces IGP and AICAR from PRFAR using the ammonia provided by the HisH subunit. This Pseudoalteromonas atlantica (strain T6c / ATCC BAA-1087) protein is Imidazole glycerol phosphate synthase subunit HisF.